A 157-amino-acid chain; its full sequence is Small ribosomal subunit protein uS7 (157 aa).

Belongs to the universal ribosomal protein uS7 family. As to quaternary structure, part of the 30S ribosomal subunit. Contacts proteins S9 and S11.

Its function is as follows. One of the primary rRNA binding proteins, it binds directly to 16S rRNA where it nucleates assembly of the head domain of the 30S subunit. Is located at the subunit interface close to the decoding center, probably blocks exit of the E-site tRNA. This is Small ribosomal subunit protein uS7 from Borreliella burgdorferi (strain ATCC 35210 / DSM 4680 / CIP 102532 / B31) (Borrelia burgdorferi).